Reading from the N-terminus, the 262-residue chain is Abhydrolase domain-containing protein ACTT2-2 (262 aa).

The Peroxisomal targeting signal type 1 signature appears at serine 260–leucine 262.

It belongs to the AB hydrolase superfamily. AKT2 hydrolase family.

It localises to the peroxisome. The protein operates within mycotoxin biosynthesis. Its function is as follows. Abhydrolase domain-containing protein; part of the gene clusters that mediate the biosynthesis of the host-selective toxins (HSTs) ACT-toxins responsible for brown spot of tangerine disease by the tangerine pathotype which affects tangerines and mandarins. ACT-toxins consist of three moieties, 9,10-epoxy-8-hydroxy-9-methyl-decatrienoic acid (EDA), valine and a polyketide. ACT-toxin I is toxic to both citrus and pear; toxin II the 5''-deoxy derivative of ACT-toxin I, is highly toxic to pear and slightly toxic to citrus. On cellular level, ACT-toxins affect plasma membrane of susceptible cells and cause a sudden increase in loss of K(+) after a few minutes of toxin treatment. The acyl-CoA ligase ACTT1, the hydrolase ACTT2, the enoyl-CoA hydratases ACTT3 and ACTT6, and the acyl-CoA synthetase ACTT5 are all involved in the biosynthesis of the AK-, AF- and ACT-toxin common 9,10-epoxy-8-hydroxy-9-methyl-decatrienoic acid (EDA) structural moiety. The exact role of each enzyme, and of additional enzymes identified within the AF-toxin clusters have still to be determined. On the other hand, ACTTS1 to ACTTS4 are specific to the tangerine pathotype. The function of ACTTS3 is to elongate the polyketide chain portion of ACT-toxin that is unique to this toxin. The enoyl-reductase ACTTS2 might complement the missing enoyl-reductase (ER) domain in ACTTS3 in the synthesis of the polyketide portion of ACT-toxin. The roles of the nonribosomal peptide synthetases-related proteins ACTTS1 and ACTTS4 have also still not been elucidated. This is Abhydrolase domain-containing protein ACTT2-2 (ACTT2-2) from Alternaria alternata (Alternaria rot fungus).